A 451-amino-acid polypeptide reads, in one-letter code: Phosphoglucosamine mutase (451 aa).

Ser-103 functions as the Phosphoserine intermediate in the catalytic mechanism. Ser-103, Asp-243, Asp-245, and Asp-247 together coordinate Mg(2+). Ser-103 is subject to Phosphoserine.

The protein belongs to the phosphohexose mutase family. It depends on Mg(2+) as a cofactor. Activated by phosphorylation.

It catalyses the reaction alpha-D-glucosamine 1-phosphate = D-glucosamine 6-phosphate. Functionally, catalyzes the conversion of glucosamine-6-phosphate to glucosamine-1-phosphate. The sequence is that of Phosphoglucosamine mutase from Limosilactobacillus reuteri subsp. reuteri (strain JCM 1112) (Lactobacillus reuteri).